The following is a 243-amino-acid chain: Phosphoribosylaminoimidazole-succinocarboxamide synthase (243 aa).

The protein belongs to the SAICAR synthetase family.

It catalyses the reaction 5-amino-1-(5-phospho-D-ribosyl)imidazole-4-carboxylate + L-aspartate + ATP = (2S)-2-[5-amino-1-(5-phospho-beta-D-ribosyl)imidazole-4-carboxamido]succinate + ADP + phosphate + 2 H(+). The protein operates within purine metabolism; IMP biosynthesis via de novo pathway; 5-amino-1-(5-phospho-D-ribosyl)imidazole-4-carboxamide from 5-amino-1-(5-phospho-D-ribosyl)imidazole-4-carboxylate: step 1/2. The chain is Phosphoribosylaminoimidazole-succinocarboxamide synthase from Prochlorococcus marinus (strain MIT 9211).